A 510-amino-acid chain; its full sequence is Probable cytosol aminopeptidase (510 aa).

Residues lysine 282 and aspartate 287 each contribute to the Mn(2+) site. The active site involves lysine 294. 3 residues coordinate Mn(2+): aspartate 305, aspartate 364, and glutamate 366. Residue arginine 368 is part of the active site.

It belongs to the peptidase M17 family. The cofactor is Mn(2+).

The protein resides in the cytoplasm. It carries out the reaction Release of an N-terminal amino acid, Xaa-|-Yaa-, in which Xaa is preferably Leu, but may be other amino acids including Pro although not Arg or Lys, and Yaa may be Pro. Amino acid amides and methyl esters are also readily hydrolyzed, but rates on arylamides are exceedingly low.. The catalysed reaction is Release of an N-terminal amino acid, preferentially leucine, but not glutamic or aspartic acids.. Its function is as follows. Presumably involved in the processing and regular turnover of intracellular proteins. Catalyzes the removal of unsubstituted N-terminal amino acids from various peptides. This chain is Probable cytosol aminopeptidase, found in Cupriavidus pinatubonensis (strain JMP 134 / LMG 1197) (Cupriavidus necator (strain JMP 134)).